A 127-amino-acid chain; its full sequence is Small ribosomal subunit protein uS11 (127 aa).

The protein belongs to the universal ribosomal protein uS11 family. As to quaternary structure, part of the 30S ribosomal subunit. Interacts with proteins S7 and S18. Binds to IF-3.

In terms of biological role, located on the platform of the 30S subunit, it bridges several disparate RNA helices of the 16S rRNA. Forms part of the Shine-Dalgarno cleft in the 70S ribosome. The sequence is that of Small ribosomal subunit protein uS11 from Anaeromyxobacter sp. (strain Fw109-5).